A 372-amino-acid chain; its full sequence is D-alanine--D-alanine ligase (372 aa).

The ATP-grasp domain maps to 145 to 349 (KTVLRAGGIP…CPNLLDQLIE (205 aa)). An ATP-binding site is contributed by 176–231 (DRWGTSELFVKAVSLGSSVATLPVKTETEFTKAVKEVFRYDDRLMVEPRIRGREIE). Asp-303, Glu-316, and Asn-318 together coordinate Mg(2+).

Belongs to the D-alanine--D-alanine ligase family. Requires Mg(2+) as cofactor. Mn(2+) is required as a cofactor.

The protein localises to the cytoplasm. The enzyme catalyses 2 D-alanine + ATP = D-alanyl-D-alanine + ADP + phosphate + H(+). It functions in the pathway cell wall biogenesis; peptidoglycan biosynthesis. Its function is as follows. Cell wall formation. This is D-alanine--D-alanine ligase from Coxiella burnetii (strain Dugway 5J108-111).